We begin with the raw amino-acid sequence, 643 residues long: Conglutin alpha 2 (643 aa).

A signal peptide spans 1–22 (MAKPCLFSFSLCLLLLSSLCLA). 2 disulfides stabilise this stretch: C31–C64 and C107–C464. One can recognise a Cupin type-1 1 domain in the interval 36-261 (LNALEPDNRV…AFNVDEEIIN (226 aa)). Disordered stretches follow at residues 110-142 (TYEE…DSHQ), 190-243 (PRRF…VLSG), and 285-458 (PKSQ…SRNG). A compositionally biased stretch (low complexity) spans 207–218 (QEQQGQQREQQQ). 2 stretches are compositionally biased toward basic and acidic residues: residues 228–237 (HQQEQEEEGK) and 298–313 (PRQR…RREE). Acidic residues predominate over residues 314–323 (EKEEEEEEDE). Composition is skewed to basic and acidic residues over residues 324-333 (PRSRERYERQ) and 357-369 (QEGR…WERT). Basic residues predominate over residues 422–433 (RGRHGGRGRRSG). In terms of domain architecture, Cupin type-1 2 spans 470–616 (ENIAKPSRAD…AFGLRLNQVS (147 aa)). Residues 623-632 (NQGPLVSPQS) show a composition bias toward polar residues. Positions 623 to 643 (NQGPLVSPQSESEDHTLPKVA) are disordered. Over residues 634–643 (SEDHTLPKVA) the composition is skewed to basic and acidic residues.

It belongs to the 11S seed storage protein (globulins) family. Hexamer; each subunit is composed of an acidic and a basic chain derived from a single precursor and linked by a disulfide bond. Component of globulins complexes which accumulate in seeds.

Functionally, sulfur-rich seed storage protein. This protein found in the seeds of many leguminous and non-leguminous plants is the source of sulfur-containing amino acids in seed meals. This chain is Conglutin alpha 2, found in Lupinus angustifolius (Narrow-leaved blue lupine).